The primary structure comprises 388 residues: Succinate--CoA ligase [ADP-forming] subunit beta (388 aa).

Residues 9 to 244 (KEIFRSMGVA…LEEEDPKEIE (236 aa)) form the ATP-grasp domain. ATP-binding positions include K46, 53–55 (GRG), E99, C102, and E107. Mg(2+) contacts are provided by N199 and D213. Substrate contacts are provided by residues N264 and 321–323 (GIM).

Belongs to the succinate/malate CoA ligase beta subunit family. In terms of assembly, heterotetramer of two alpha and two beta subunits. The cofactor is Mg(2+).

The enzyme catalyses succinate + ATP + CoA = succinyl-CoA + ADP + phosphate. It carries out the reaction GTP + succinate + CoA = succinyl-CoA + GDP + phosphate. It participates in carbohydrate metabolism; tricarboxylic acid cycle; succinate from succinyl-CoA (ligase route): step 1/1. Functionally, succinyl-CoA synthetase functions in the citric acid cycle (TCA), coupling the hydrolysis of succinyl-CoA to the synthesis of either ATP or GTP and thus represents the only step of substrate-level phosphorylation in the TCA. The beta subunit provides nucleotide specificity of the enzyme and binds the substrate succinate, while the binding sites for coenzyme A and phosphate are found in the alpha subunit. The chain is Succinate--CoA ligase [ADP-forming] subunit beta from Staphylococcus epidermidis (strain ATCC 35984 / DSM 28319 / BCRC 17069 / CCUG 31568 / BM 3577 / RP62A).